Reading from the N-terminus, the 182-residue chain is DOMON domain-containing protein Y73F4A.1 (182 aa).

An N-terminal signal peptide occupies residues 1 to 18; sequence MFVLAIVFAFVFIPSSSS. A DOMON domain is found at 26–143; it reads ELVSMNWNVK…CLNWMVVPGG (118 aa). N-linked (GlcNAc...) asparagine glycosylation is found at Asn-47 and Asn-128.

The protein localises to the secreted. This chain is DOMON domain-containing protein Y73F4A.1, found in Caenorhabditis elegans.